A 563-amino-acid chain; its full sequence is Testis-expressed basic protein 1 (563 aa).

The chain crosses the membrane as a helical span at residues 3–23 (VLEITLAVILTLLGLAILAIL). The segment at 56–81 (GSRHAYSTQSDTSYDNRERSKRDYTP) is disordered. Residues 69–79 (YDNRERSKRDY) are compositionally biased toward basic and acidic residues. A helical membrane pass occupies residues 99–119 (ELILLLMCFILALSRSSIGSI). Positions 311–563 (SEMSIPQGQG…GRKYNKKVEE (253 aa)) are disordered. Residues 367–383 (QVEKSEMGVPRRQESQV) show a composition bias toward basic and acidic residues. A compositionally biased stretch (low complexity) spans 384–395 (KKSQSGVSKGQE). Composition is skewed to basic and acidic residues over residues 412 to 447 (QVEKSELKVPKGQEGQVEKTEADVPKEQEVQEKKSE) and 485 to 544 (EAQE…EKSK).

Its subcellular location is the membrane. The protein is Testis-expressed basic protein 1 of Homo sapiens (Human).